We begin with the raw amino-acid sequence, 100 residues long: Urease subunit gamma (100 aa).

This sequence belongs to the urease gamma subunit family. Heterotrimer of UreA (gamma), UreB (beta) and UreC (alpha) subunits. Three heterotrimers associate to form the active enzyme.

The protein localises to the cytoplasm. The enzyme catalyses urea + 2 H2O + H(+) = hydrogencarbonate + 2 NH4(+). The protein operates within nitrogen metabolism; urea degradation; CO(2) and NH(3) from urea (urease route): step 1/1. This chain is Urease subunit gamma, found in Cereibacter sphaeroides (strain ATCC 17025 / ATH 2.4.3) (Rhodobacter sphaeroides).